The primary structure comprises 114 residues: Amphinase-3 (114 aa).

The Proton acceptor role is filled by histidine 15. Asparagine 25 carries N-linked (GlcNAc...) asparagine glycosylation. Disulfide bonds link cysteine 26-cysteine 79, cysteine 41-cysteine 85, cysteine 59-cysteine 100, and cysteine 97-cysteine 114. Lysine 42–threonine 46 contacts substrate. Asparagine 67 and asparagine 91 each carry an N-linked (GlcNAc...) asparagine glycan. The active-site Proton donor is the histidine 107.

Belongs to the pancreatic ribonuclease family. Monomer. There are at least five different forms arising from glycan heterogeneity.

It is found in the secreted. In terms of biological role, endonuclease, hydrolyzes highly polymerized RNA, poly(U) and poly(C), and the dinucleotides CpA and UpA. More active towards rCA than rUA or rUG. Has cytotoxic activity against cultured human submaxillary gland carcinoma cells. The chain is Amphinase-3 from Lithobates pipiens (Northern leopard frog).